The chain runs to 281 residues: Arabinooligosaccharides transport system permease protein AraQ (281 aa).

The next 6 helical transmembrane spans lie at 15–35, 81–101, 112–132, 142–162, 185–205, and 247–267; these read LTLFFMMLSLLYLFPIFCLLL, LVLGLFTTVLTLFFSSMIGYG, IIFVLVLIIMMVPLEVMMLPL, IDSYTGVILPFIVSPVAVFFF, FGIFFRIMAPLMKPAFGAMII, and MLISGSVFAILPVIIIFLFFQ. One can recognise an ABC transmembrane type-1 domain in the interval 77–266; it reads FFNSLVLGLF…LPVIIIFLFF (190 aa).

It belongs to the binding-protein-dependent transport system permease family. MalFG subfamily. As to quaternary structure, the complex is composed of two ATP-binding proteins (MsmX), two transmembrane proteins (AraP and AraQ) and a solute-binding protein (AraN).

It localises to the cell membrane. Its function is as follows. Part of the ABC transporter complex AraNPQ involved in the uptake of arabinooligosaccharides. Transports alpha-1,5-arabinooligosaccharides, at least up to four L-arabinosyl units. Responsible for the translocation of the substrate across the membrane. This Bacillus subtilis (strain 168) protein is Arabinooligosaccharides transport system permease protein AraQ.